Consider the following 183-residue polypeptide: Capsid protein (183 aa).

The interval 136 to 183 (NAPILSTLPETTVVRRRGRSPRRRTPSPRRRRSQSPRRRRSKSRESQC) is disordered. A compositionally biased stretch (basic residues) spans 149 to 177 (VRRRGRSPRRRTPSPRRRRSQSPRRRRSK). 3 positions are modified to phosphoserine; by host: Ser155, Ser162, and Ser170. The 1; half-length repeat unit spans residues 155–160 (SPRRRT). Residues 155-176 (SPRRRTPSPRRRRSQSPRRRRS) form a 3 X 7 AA repeats of S-P-R-R-R-[PR]-S region. The Bipartite nuclear localization signal motif lies at 158 to 175 (RRTPSPRRRRSQSPRRRR). A run of 2 repeats spans residues 162–168 (SPRRRRS) and 170–176 (SPRRRRS). The tract at residues 177 to 183 (KSRESQC) is RNA binding.

This sequence belongs to the orthohepadnavirus core antigen family. Homodimerizes, then multimerizes. Interacts with cytosol exposed regions of viral L glycoprotein present in the reticulum-to-Golgi compartment. Interacts with human FLNB. Phosphorylated form interacts with host importin alpha; this interaction depends on the exposure of the NLS, which itself depends upon genome maturation and/or phosphorylation of the capsid protein. Interacts with host NUP153. In terms of processing, phosphorylated by host SRPK1, SRPK2, and maybe protein kinase C or GAPDH. Phosphorylation is critical for pregenomic RNA packaging. Protein kinase C phosphorylation is stimulated by HBx protein and may play a role in transport of the viral genome to the nucleus at the late step during the viral replication cycle.

Its subcellular location is the virion. It is found in the host cytoplasm. Self assembles to form an icosahedral capsid. Most capsids appear to be large particles with an icosahedral symmetry of T=4 and consist of 240 copies of capsid protein, though a fraction forms smaller T=3 particles consisting of 180 capsid proteins. Entering capsids are transported along microtubules to the nucleus. Phosphorylation of the capsid is thought to induce exposure of nuclear localization signal in the C-terminal portion of the capsid protein that allows binding to the nuclear pore complex via the importin (karyopherin-) alpha and beta. Capsids are imported in intact form through the nuclear pore into the nuclear basket, where it probably binds NUP153. Only capsids that contain the mature viral genome can release the viral DNA and capsid protein into the nucleoplasm. Immature capsids get stuck in the basket. Capsids encapsulate the pre-genomic RNA and the P protein. Pre-genomic RNA is reverse-transcribed into DNA while the capsid is still in the cytoplasm. The capsid can then either be directed to the nucleus, providing more genomes for transcription, or bud through the endoplasmic reticulum to provide new virions. The polypeptide is Capsid protein (Hepatitis B virus genotype C subtype ar (isolate Japan/S-207/1988) (HBV-C)).